The following is a 796-amino-acid chain: Nuclear GTPase SLIP-GC (796 aa).

107–114 serves as a coordination point for GTP; that stretch reads GITGAGKS. Coiled-coil stretches lie at residues 158-185 and 742-776; these read SDQEWKAELKDLTKLLHRAEQSGEEEAD and GLCKELADVRNEQKEMEKLYRSLREVAENAQLRRS.

The protein resides in the nucleus speckle. Functionally, nuclear GTPase found in germinal center B-cells, where it may inhibit function of the activation-induced cytidine deaminase AICDA. Reduces somatic hypermutation in B-cells which may enhance genome stability. This Mus musculus (Mouse) protein is Nuclear GTPase SLIP-GC.